Consider the following 310-residue polypeptide: Malate dehydrogenase (310 aa).

Residues 7-12 (GAGNVG) and aspartate 32 contribute to the NAD(+) site. Arginine 81 and arginine 87 together coordinate substrate. Residues asparagine 94 and 117-119 (VSN) each bind NAD(+). Residues asparagine 119 and arginine 150 each contribute to the substrate site. The Proton acceptor role is filled by histidine 174.

This sequence belongs to the LDH/MDH superfamily. MDH type 3 family.

The catalysed reaction is (S)-malate + NAD(+) = oxaloacetate + NADH + H(+). In terms of biological role, catalyzes the reversible oxidation of malate to oxaloacetate. This chain is Malate dehydrogenase, found in Chlorobium chlorochromatii (strain CaD3).